The primary structure comprises 395 residues: Elongation factor Tu (395 aa).

One can recognise a tr-type G domain in the interval 10 to 204 (KPHVNIGTIG…AVDNYIPHPV (195 aa)). The tract at residues 19–26 (GHVDHGKT) is G1. Position 19–26 (19–26 (GHVDHGKT)) interacts with GTP. Residue T26 coordinates Mg(2+). Positions 60-64 (GITIS) are G2. The tract at residues 81 to 84 (DCPG) is G3. GTP-binding positions include 81-85 (DCPGH) and 136-139 (NKVD). The tract at residues 136–139 (NKVD) is G4. Residues 174–176 (SAL) are G5.

This sequence belongs to the TRAFAC class translation factor GTPase superfamily. Classic translation factor GTPase family. EF-Tu/EF-1A subfamily. In terms of assembly, monomer.

The protein resides in the cytoplasm. It catalyses the reaction GTP + H2O = GDP + phosphate + H(+). GTP hydrolase that promotes the GTP-dependent binding of aminoacyl-tRNA to the A-site of ribosomes during protein biosynthesis. In Rickettsia akari (strain Hartford), this protein is Elongation factor Tu.